The sequence spans 499 residues: MSLSLYDSAHSLDGKSGWDTPVFSMKDSMDRNPMVTEAWEALCQSQVYFRGKPVGTIAAYDHASEEVLNYDQVFVRDFVPSALAFLMNGEPEIVKNFLLKTLHIQGQDKMIDKFKLGDGAMPASFKVLHNPIKKTDTIIADFGESAIGRVAPVDSGFWWIILLRAYTKSTGDHSLAERPECQKGMRLILSLCLSEGFDTFPTLLCADGCSMVDRRMGIYGYPIEIQALFFMALRSALSMLKHDSEGKEFMEKIVKRLHALSFHMRSYFWLDFQQLNDIYRYKTEEYSHTAVNKFNVIPDSIPDWIFDFMPLRGGYFVGNVSPARMDFRWFALGNCIAILSSLATPEQSMAIMDLIEARWEELVGEMPLKICYPAMESHEWGIVTGCDPKNTRWSYHNGGSWPVLLWLLTAASIKTGRPQIARRAIELAEARLLKDGWPEYYDGKSGRFIGKQARKSQTWSIAGYLVAKMMMDDPTHVGMISMEEEKHMKPPLRRSSSWT.

S11 bears the Phosphoserine mark. T20 bears the Phosphothreonine mark. A Phosphoserine modification is found at S497.

The protein belongs to the glycosyl hydrolase 100 family.

It catalyses the reaction Hydrolysis of terminal non-reducing beta-D-fructofuranoside residues in beta-D-fructofuranosides.. Invertase that cleaves sucrose into glucose and fructose. The sequence is that of Probable alkaline/neutral invertase F from Arabidopsis thaliana (Mouse-ear cress).